Here is a 327-residue protein sequence, read N- to C-terminus: MEVAVPVKQEAEGLALDSPWHRFRRFHLGDAPGPREALGLLRALCRDWLRPEVHTKEQMLELLVLEQFLSALPADTQAWVCSRQPQSGEEAVALLEELWGPAASPDGSSATRVPQDVTQGPGATGGKEDSGMIPLAGTAPGAEGPAPGDSQAVRPYKQEPSSPPLAPGLPAFLAAPGTTSCPECGKTSLKPAHLLRHRQSHSGEKPHACPECGKAFRRKEHLRRHRDTHPGSPGSPGPALRPLPAREKPHACCECGKTFYWREHLVRHRKTHSGARPFACWECGKGFGRREHVLRHQRIHGRAAASAQGAVAPGPDGGGPFPPWPLG.

M1 is modified (N-acetylmethionine). K8 participates in a covalent cross-link: Glycyl lysine isopeptide (Lys-Gly) (interchain with G-Cter in SUMO2). S18 and S104 each carry phosphoserine. In terms of domain architecture, SCAN box spans 20–104 (WHRFRRFHLG…LEELWGPAAS (85 aa)). Residues 101–171 (PAASPDGSSA…SPPLAPGLPA (71 aa)) are disordered. The span at 106–118 (DGSSATRVPQDVT) shows a compositional bias: polar residues. Over residues 134-148 (PLAGTAPGAEGPAPG) the composition is skewed to low complexity. C2H2-type zinc fingers lie at residues 179 to 201 (TSCP…RQSH) and 207 to 229 (HACP…RDTH). K190 is covalently cross-linked (Glycyl lysine isopeptide (Lys-Gly) (interchain with G-Cter in SUMO2)). The disordered stretch occupies residues 220 to 243 (EHLRRHRDTHPGSPGSPGPALRPL). A Phosphoserine modification is found at S235. C2H2-type zinc fingers lie at residues 250–272 (HACC…RKTH) and 278–300 (FACW…QRIH). The segment covering 305–314 (ASAQGAVAPG) has biased composition (low complexity). The tract at residues 305 to 327 (ASAQGAVAPGPDGGGPFPPWPLG) is disordered.

It belongs to the krueppel C2H2-type zinc-finger protein family.

It is found in the nucleus. Its function is as follows. Transcriptional regulator. Binds to the 5'-flanking critical region of the SCARF1 promoter. This chain is Zinc finger protein 444 (ZNF444), found in Homo sapiens (Human).